The chain runs to 469 residues: Pup--protein ligase (469 aa).

E9 provides a ligand contact to Mg(2+). R53 contributes to the ATP binding site. Y55 lines the Mg(2+) pocket. The active-site Proton acceptor is D57. A Mg(2+)-binding site is contributed by E63. ATP contacts are provided by T66 and W430.

Belongs to the Pup ligase/Pup deamidase family. Pup-conjugating enzyme subfamily.

The enzyme catalyses ATP + [prokaryotic ubiquitin-like protein]-L-glutamate + [protein]-L-lysine = ADP + phosphate + N(6)-([prokaryotic ubiquitin-like protein]-gamma-L-glutamyl)-[protein]-L-lysine.. It participates in protein degradation; proteasomal Pup-dependent pathway. Its pathway is protein modification; protein pupylation. In terms of biological role, catalyzes the covalent attachment of the prokaryotic ubiquitin-like protein modifier Pup to the proteasomal substrate proteins, thereby targeting them for proteasomal degradation. This tagging system is termed pupylation. The ligation reaction involves the side-chain carboxylate of the C-terminal glutamate of Pup and the side-chain amino group of a substrate lysine. The protein is Pup--protein ligase of Kocuria rhizophila (strain ATCC 9341 / DSM 348 / NBRC 103217 / DC2201).